A 313-amino-acid polypeptide reads, in one-letter code: 4-hydroxy-3-methylbut-2-enyl diphosphate reductase (313 aa).

A [4Fe-4S] cluster-binding site is contributed by Cys20. 2 residues coordinate (2E)-4-hydroxy-3-methylbut-2-enyl diphosphate: His49 and His82. Positions 49 and 82 each coordinate dimethylallyl diphosphate. 2 residues coordinate isopentenyl diphosphate: His49 and His82. Cys104 contributes to the [4Fe-4S] cluster binding site. A (2E)-4-hydroxy-3-methylbut-2-enyl diphosphate-binding site is contributed by His132. His132 serves as a coordination point for dimethylallyl diphosphate. His132 lines the isopentenyl diphosphate pocket. Glu134 acts as the Proton donor in catalysis. Thr172 contributes to the (2E)-4-hydroxy-3-methylbut-2-enyl diphosphate binding site. Cys201 lines the [4Fe-4S] cluster pocket. Ser229, Ser230, Asn231, and Ser273 together coordinate (2E)-4-hydroxy-3-methylbut-2-enyl diphosphate. Dimethylallyl diphosphate is bound by residues Ser229, Ser230, Asn231, and Ser273. Isopentenyl diphosphate contacts are provided by Ser229, Ser230, Asn231, and Ser273.

Belongs to the IspH family. [4Fe-4S] cluster is required as a cofactor.

It carries out the reaction isopentenyl diphosphate + 2 oxidized [2Fe-2S]-[ferredoxin] + H2O = (2E)-4-hydroxy-3-methylbut-2-enyl diphosphate + 2 reduced [2Fe-2S]-[ferredoxin] + 2 H(+). The enzyme catalyses dimethylallyl diphosphate + 2 oxidized [2Fe-2S]-[ferredoxin] + H2O = (2E)-4-hydroxy-3-methylbut-2-enyl diphosphate + 2 reduced [2Fe-2S]-[ferredoxin] + 2 H(+). The protein operates within isoprenoid biosynthesis; dimethylallyl diphosphate biosynthesis; dimethylallyl diphosphate from (2E)-4-hydroxy-3-methylbutenyl diphosphate: step 1/1. It functions in the pathway isoprenoid biosynthesis; isopentenyl diphosphate biosynthesis via DXP pathway; isopentenyl diphosphate from 1-deoxy-D-xylulose 5-phosphate: step 6/6. In terms of biological role, catalyzes the conversion of 1-hydroxy-2-methyl-2-(E)-butenyl 4-diphosphate (HMBPP) into a mixture of isopentenyl diphosphate (IPP) and dimethylallyl diphosphate (DMAPP). Acts in the terminal step of the DOXP/MEP pathway for isoprenoid precursor biosynthesis. This Desulfotalea psychrophila (strain LSv54 / DSM 12343) protein is 4-hydroxy-3-methylbut-2-enyl diphosphate reductase.